The following is a 598-amino-acid chain: Inactive metallocarboxypeptidase ECM14 (598 aa).

The N-terminal stretch at methionine 1–alanine 21 is a signal peptide. A propeptide spanning residues isoleucine 22–proline 174 is cleaved from the precursor. In terms of domain architecture, Peptidase M14 spans asparagine 202 to leucine 522. Positions 264 and 267 each coordinate Zn(2+). Substrate-binding positions include histidine 264–glutamate 267, arginine 322, and aspartate 339–arginine 340. A disulfide bridge connects residues cysteine 333 and cysteine 356. An N-linked (GlcNAc...) asparagine glycan is attached at asparagine 349. Residue histidine 396 participates in Zn(2+) binding. Serine 397–tyrosine 398 is a binding site for substrate. Residues glutamine 539–arginine 598 are disordered. A compositionally biased stretch (acidic residues) spans asparagine 550–aspartate 562. The segment covering glycine 564–asparagine 581 has biased composition (basic and acidic residues).

This sequence belongs to the peptidase M14 family. The cofactor is Zn(2+).

It localises to the vacuole. The protein resides in the secreted. Functionally, inactive carboxypeptidase that may play a role in cell wall organization and biogenesis. The polypeptide is Inactive metallocarboxypeptidase ECM14 (ECM14) (Ajellomyces capsulatus (strain H143) (Darling's disease fungus)).